The primary structure comprises 434 residues: Oxysterol-binding protein homolog 5 (434 aa).

Residues S18–T371 form an OSBP-related domain (ORD) region. L24–A29 is a binding site for a 1,2-diacyl-sn-glycero-3-phospho-(1D-myo-inositol 4-phosphate). Residue Q96 participates in 20-hydroxycholesterol binding. Q96 contacts 25-hydroxycholesterol. Residues Q96 and R100 each coordinate 7beta-hydroxycholesterol. A cholesterol-binding site is contributed by Q96. Residue Q96 coordinates ergosterol. A 1,2-diacyl-sn-glycero-3-phospho-(1D-myo-inositol 4-phosphate)-binding positions include K109–N112, H143–H144, K335, E339, and R343. Position 389 is a phosphoserine (S389).

Belongs to the OSBP family.

It localises to the vacuole membrane. It is found in the bud neck. In terms of biological role, lipid transport protein (LTP) involved in non-vesicular transfer of lipids between membranes. Functions in phosphoinositide-coupled directional transport of various lipids by carrying the lipid molecule in a hydrophobic pocket and transferring it between membranes through the cytosol. Involved in maintenance of intracellular sterol distribution and homeostasis. Plays a role in ergosterol synthesis. Binds and transports sterol. May be involved in ergosterol transport from the plasma membrane (PM) to the ER. In Saccharomyces cerevisiae (strain ATCC 204508 / S288c) (Baker's yeast), this protein is Oxysterol-binding protein homolog 5.